The primary structure comprises 1481 residues: Cystic fibrosis transmembrane conductance regulator (1481 aa).

Residues 1-77 (MQRSPLEKAS…KLINALRRCF (77 aa)) are Cytoplasmic-facing. The helical transmembrane segment at 78-98 (FWRFMFYGILLYLGEVTKAVQ) threads the bilayer. Positions 81–365 (FMFYGILLYL…WAVQTWYDSL (285 aa)) constitute an ABC transmembrane type-1 1 domain. At 99 to 122 (PLLLGRIIASYDPDNKVERSIAIY) the chain is on the extracellular side. A helical membrane pass occupies residues 123–146 (LGIGLCLLFIVRMLLLHPAIFGLH). Over 147 to 195 (HIGMQMRIAMFSLIYKKILKLSSRVLDKISIGQLVSLLSNNLNKFDEGL) the chain is Cytoplasmic. Residues 196–216 (ALAHFVWIAPLQVMLLMGLLW) traverse the membrane as a helical segment. The Extracellular segment spans residues 217–222 (ELLQAS). A helical transmembrane segment spans residues 223 to 243 (AFCGLGFLIVLALFQSGLGRM). The Cytoplasmic segment spans residues 244–298 (MMKYRDQRAGKINERLVITSEMIENIQSVKAYCWEEAMEKMIENLRQTELKLTRK). A helical transmembrane segment spans residues 299–319 (AAYVRYFNSSAFFFSGFFVVF). Over 320 to 339 (LSVLPYALIKGIILRKIFTT) the chain is Extracellular. Residues 340–358 (ISFCIVLRMAVTRQFPWAV) traverse the membrane as a helical segment. Residues 359 to 858 (QTWYDSLGAI…YLRYITVHKS (500 aa)) lie on the Cytoplasmic side of the membrane. Residues W401, 458–465 (GSTGAGKT), and Q493 contribute to the ATP site. The ABC transporter 1 domain maps to 423–646 (NGDNSLFFSN…RPDFSSKLMG (224 aa)). C524 carries S-palmitoyl cysteine lipidation. Phosphoserine occurs at positions 549 and 660. Positions 654-831 (SAERRNSILT…EEINEEDLKE (178 aa)) are disordered R region. S670 is subject to Phosphoserine; by PKA. Residue S686 is modified to Phosphoserine. K688 participates in a covalent cross-link: Glycyl lysine isopeptide (Lys-Gly) (interchain with G-Cter in ubiquitin). Phosphoserine occurs at positions 700 and 712. T717 carries the post-translational modification Phosphothreonine. Phosphoserine occurs at positions 737, 768, 790, 795, and 813. Residues 859-879 (LIFVLIWCLVIFLAEVAVSLV) traverse the membrane as a helical segment. In terms of domain architecture, ABC transmembrane type-1 2 spans 859 to 1155 (LIFVLIWCLV…AVNSSIDVDS (297 aa)). Residues 880–918 (LLWLLGNAPAYNKGNSTISANSSYAVIITSTSAYYVFYI) are Extracellular-facing. 2 N-linked (GlcNAc...) asparagine glycosylation sites follow: N894 and N900. A discontinuously helical transmembrane segment spans residues 919-939 (YVGVADTLLALGFFRGLPLVH). Topologically, residues 940-990 (TLITVSKILHHKMLHSVLQAPMSTLNALKAGGILNRFSKDIAILDDLLPLT) are cytoplasmic. The helical transmembrane segment at 991–1011 (IFDFIQLLLIVIGAVAVVSVL) threads the bilayer. Residues 1012–1013 (QP) lie on the Extracellular side of the membrane. Residues 1014 to 1034 (YIFLATVPVIVTFIILRAYFL) form a helical membrane-spanning segment. Over 1035–1095 (HTSQQLKQLE…TANWFLYLST (61 aa)) the chain is Cytoplasmic. A helical transmembrane segment spans residues 1096–1116 (LRWFQMRIEMVFVIFFIVVTF). The Extracellular portion of the chain corresponds to 1117–1130 (ISILTTGEGEGQVG). Residues 1131–1151 (IILTLAMNIMGTLQWAVNSSI) traverse the membrane as a helical segment. Residues 1152 to 1481 (DVDSLMRSVS…TEEEVQDTRL (330 aa)) are Cytoplasmic-facing. Positions 1211 to 1444 (MTVKDLTARY…KSLFRQAISP (234 aa)) constitute an ABC transporter 2 domain. ATP-binding positions include Y1220 and 1245 to 1252 (GRTGSGKS). Positions 1387–1481 (RTLKQAFADC…TEEEVQDTRL (95 aa)) are interaction with GORASP2. C1396 carries S-palmitoyl cysteine lipidation. Phosphoserine is present on residues S1445 and S1457. The tract at residues 1449-1481 (KLFPRRNSSKHKSRPPITALKEETEEEVQDTRL) is disordered. Residues 1450–1462 (LFPRRNSSKHKSR) are compositionally biased toward basic residues. Over residues 1471–1481 (ETEEEVQDTRL) the composition is skewed to acidic residues. Positions 1479–1481 (TRL) match the PDZ-binding motif.

It belongs to the ABC transporter superfamily. ABCC family. CFTR transporter (TC 3.A.1.202) subfamily. Monomer; does not require oligomerization for channel activity. May form oligomers in the membrane. Interacts with SLC26A3, SLC26A6 and NHERF1. Interacts with SHANK2. Interacts with MYO6. Interacts (via C-terminus) with GOPC (via PDZ domain); this promotes CFTR internalization and thereby decreases channel activity. Interacts with SLC4A7 through NHERF1. Found in a complex with MYO5B and RAB11A. Interacts with ANO1. Interacts with SLC26A8. Interacts with AHCYL1; the interaction increases CFTR activity. Interacts with CSE1L. The core-glycosylated form interacts with GORASP2 (via PDZ GRASP-type 1 domain) in respone to ER stress. Interacts with MARCHF2; the interaction leads to CFTR ubiqtuitination and degradation. Interacts with ADGRG2. N-glycosylated. Post-translationally, phosphorylated; cAMP treatment promotes phosphorylation and activates the channel. Dephosphorylation decreases the ATPase activity (in vitro). Phosphorylation at PKA sites activates the channel. Phosphorylation at PKC sites enhances the response to phosphorylation by PKA. Phosphorylated by AMPK; this inhibits channel activity. In terms of processing, ubiquitinated, leading to its degradation in the lysosome. Deubiquitination by USP10 in early endosomes enhances its endocytic recycling to the cell membrane. Ubiquitinated by RNF185 during ER stress. Ubiquitinated by MARCHF2.

The protein resides in the apical cell membrane. Its subcellular location is the early endosome membrane. It is found in the cell membrane. The protein localises to the recycling endosome membrane. It localises to the endoplasmic reticulum membrane. The protein resides in the nucleus. It catalyses the reaction ATP + H2O + closed Cl(-) channel = ADP + phosphate + open Cl(-) channel.. The enzyme catalyses chloride(in) = chloride(out). It carries out the reaction hydrogencarbonate(in) = hydrogencarbonate(out). The catalysed reaction is ATP + H2O = ADP + phosphate + H(+). Epithelial ion channel that plays an important role in the regulation of epithelial ion and water transport and fluid homeostasis. Mediates the transport of chloride ions across the cell membrane. Possesses an intrinsic ATPase activity and utilizes ATP to gate its channel; the passive flow of anions through the channel is gated by cycles of ATP binding and hydrolysis by the ATP-binding domains. The ion channel is also permeable to HCO(3)(-); selectivity depends on the extracellular chloride concentration. Exerts its function also by modulating the activity of other ion channels and transporters. Contributes to the regulation of the pH and the ion content of the epithelial fluid layer. Modulates the activity of the epithelial sodium channel (ENaC) complex, in part by regulating the cell surface expression of the ENaC complex. May regulate bicarbonate secretion and salvage in epithelial cells by regulating the transporter SLC4A7. Can inhibit the chloride channel activity of ANO1. Plays a role in the chloride and bicarbonate homeostasis during sperm epididymal maturation and capacitation. In Microcebus murinus (Gray mouse lemur), this protein is Cystic fibrosis transmembrane conductance regulator.